A 298-amino-acid chain; its full sequence is Tyrosine recombinase XerC (298 aa).

The Core-binding (CB) domain maps to 2-88 (TDLHTDVERY…ALRSFFDWLV (87 aa)). The region spanning 109–288 (HLPKNIDVDD…DFQHLASVYD (180 aa)) is the Tyr recombinase domain. Residues Arg-148, Lys-172, His-240, Arg-243, and His-266 contribute to the active site. Residue Tyr-275 is the O-(3'-phospho-DNA)-tyrosine intermediate of the active site.

It belongs to the 'phage' integrase family. XerC subfamily. In terms of assembly, forms a cyclic heterotetrameric complex composed of two molecules of XerC and two molecules of XerD, in which XerC interacts with XerD via its C-terminal region, XerD interacts with XerC via its C-terminal region and so on.

It localises to the cytoplasm. FtsK may regulate the catalytic switch between XerC and XerD in the heterotetrameric complex during the two steps of the recombination process. Functionally, site-specific tyrosine recombinase, which acts by catalyzing the cutting and rejoining of the recombining DNA molecules. Binds cooperatively to specific DNA consensus sequences that are separated from XerD binding sites by a short central region, forming the heterotetrameric XerC-XerD complex that recombines DNA substrates. The complex is essential to convert dimers of the bacterial chromosome into monomers to permit their segregation at cell division. It also contributes to the segregational stability of plasmids. In the complex XerC specifically exchanges the top DNA strands. This is Tyrosine recombinase XerC from Escherichia coli O45:K1 (strain S88 / ExPEC).